The primary structure comprises 781 residues: Catenin beta-1 (781 aa).

At Ala-2 the chain carries N-acetylalanine. Residues 2 to 23 form an interaction with VCL region; that stretch reads ATQADLMELDMAMEPDRKAAVS. Position 23 is a phosphoserine; by GSK3-beta; alternate (Ser-23). The O-linked (GlcNAc) serine; alternate glycan is linked to Ser-23. Ser-29 bears the Phosphoserine; by GSK3-beta mark. Phosphoserine; by GSK3-beta and HIPK2 occurs at positions 33 and 37. The tract at residues 34 to 57 is disordered; the sequence is GIHSGATTTAPSLSGKGNPEEEDV. Residue Thr-41 is modified to Phosphothreonine; by GSK3-beta. Ser-45 bears the Phosphoserine mark. Lys-49 carries the N6-acetyllysine modification. Tyr-64 carries the post-translational modification Phosphotyrosine; by PTK6. Tyr-142 is subject to Phosphotyrosine; by FYN and PTK6. 12 ARM repeats span residues 151–191, 193–234, 235–276, 277–318, 319–360, 361–389, 400–441, 442–484, 489–530, 531–571, 594–636, and 637–666; these read RAIP…IMRS, QMVS…IFKS, GGIP…VRLA, GGLQ…ILAS, GGPQ…IVEA, GGMQ…RNLS, GLLG…VCQV, GGIE…AQNA, YGLP…LREQ, GAIP…EIVE, NTIP…AEGA, and TAPL…SEDK. The interval 156–178 is interaction with BCL9; the sequence is LTKLLNDEDQVVVNKAAVMVHQL. A Phosphoserine modification is found at Ser-191. Ser-246 is modified (phosphoserine; by CDK5). A phosphotyrosine mark is found at Tyr-331 and Tyr-333. A Phosphoserine modification is found at Ser-552. Position 556 is a phosphothreonine (Thr-556). The residue at position 619 (Cys-619) is an S-nitrosocysteine. At Ser-675 the chain carries Phosphoserine. A disordered region spans residues 720 to 781; the sequence is HSGGYGQDAL…NQLAWFDTDL (62 aa). Positions 734-745 are enriched in basic and acidic residues; the sequence is MMEHEMGGHHPG. The interaction with SCRIB stretch occupies residues 772–781; it reads NQLAWFDTDL.

It belongs to the beta-catenin family. Two separate complex-associated pools are found in the cytoplasm. The majority is present as component of an E-cadherin/ catenin adhesion complex composed of at least E-cadherin/CDH1 and beta-catenin/CTNNB1, and possibly alpha-catenin/CTNNA1; the complex is located to adherens junctions. The stable association of CTNNA1 is controversial as CTNNA1 was shown not to bind to F-actin when assembled in the complex. Alternatively, the CTNNA1-containing complex may be linked to F-actin by other proteins such as LIMA1. Another cytoplasmic pool is part of a large complex containing AXIN1, AXIN2, APC, CSNK1A1 and GSK3B that promotes phosphorylation on N-terminal Ser and Thr residues and ubiquitination of CTNNB1. Interacts directly with AXIN1; the interaction is regulated by CK2 via BTRC and its subsequent degradation by the proteasome. Interacts directly with AXIN1; the interaction is regulated by CDK2 phosphorylation. Wnt-dependent activation of DVL antagonizes the action of GSK3B. When GSK3B activity is inhibited the complex dissociates, CTNNB1 is dephosphorylated and is no longer targeted for destruction. The stabilized protein translocates to the nucleus, where it binds TCF/LEF-1 family members, BCL9, BCL9L and possibly also RUVBL1 and CHD8. Binds CTNNBIP and EP300. CTNNB1 forms a ternary complex with LEF1 and EP300 that is disrupted by CTNNBIP1 binding. Interacts with TAX1BP3 (via the PDZ domain); this interaction inhibits the transcriptional activity of CTNNB1. Interacts with AJAP1, BAIAP1, CARM1, CTNNA3, CXADR and PCDH11Y. Binds NHERF1. Interacts with GLIS2. Interacts with XIRP1. Interacts with PTPRU (via the cytoplasmic juxtamembrane domain) and with SLC30A9. Interacts with EMD. Interacts with SCRIB. Interacts with TNIK and TCF7L2. Interacts with SESTD1 and TRPC4. Interacts directly with AXIN1; the interaction is regulated by CDK2 phosphorylation of AXIN1. Interacts with CAV1. Interacts with TRPV4. The TRPV4 and CTNNB1 complex can interact with CDH1. Interacts with VCL. Interacts with PTPRJ. Interacts with PKT7. Interacts with NANOS1. Interacts with CDK2, NDRG2, NEK2 and CDK5. Found in a complex composed of MACF1, APC, AXIN1, CTNNB1 and GSK3B. Interacts with PTK6. Interacts with SOX7; this interaction may lead to proteasomal degradation of active CTNNB1 and thus inhibition of Wnt/beta-catenin-stimulated transcription. Identified in a complex with HINT1 and MITF. Interacts with FHIT. The CTNNB1 and TCF4 complex interacts with PML. Interacts with FERMT2. Identified in a complex with TCF4 and FERMT2. Interacts with RAPGEF2. Interacts with FAT1 (via the cytoplasmic domain). Interacts with RORA. May interact with P-cadherin/CDH3. Interacts with RNF220. Interacts with CTNND2. Interacts (via the C-terminal region) with CBY1. The complex composed, at least, of APC, CTNNB1 and GSK3B interacts with JPT1; the interaction requires the inactive form of GSK3B (phosphorylated at 'Ser-9'). Interacts with DLG5. Interacts with FAM53B; promoting translocation to the nucleus. Interacts with TMEM170B. Interacts with AHI1. Interacts with GID8. Component of an cadherin:catenin adhesion complex composed of at least of CDH26, beta-catenin/CTNNB1, alpha-catenin/CTNNA1 and p120 catenin/CTNND1. Forms a complex comprising APPL1, RUVBL2, APPL2, HDAC1 and HDAC2. Interacts with IRF2BPL; mediates the ubiquitination and degradation of CTNNB1. Interacts with AMFR. Interacts with LMBR1L. Interacts with SOX30; prevents interaction of CTNNB1 with TCF7L2/TCF4 and leads to inhibition of Wnt signaling. Interacts with SOX9; inhibiting CTNNB1 activity by competing with the binding sites of TCF/LEF within CTNNB1, thereby inhibiting the Wnt signaling. Interacts with SPN/CD43 cytoplasmic tail. Interacts (when phosphorylated at Tyr-333) with isoform M2 of PKM (PKM2); promoting transcription activation. Interacts with PKP2 (via HEAD domain). Interacts with CDH1. Interacts (when unphosphorylated) with FLYWCH1, perhaps preventing interaction of CTNNB1 with TCF4, and thereby regulating transcription activation; phosphorylation of CTNNB1 may inhibit the interaction. Interacts (via the central armadillo domains) with probable transcriptional regulator ADNP (via N-terminal region); interaction is direct and stabilizes CTNNB1 by modulating its phosphorylation by glycogen synthase kinase-3 beta GSK3B. Interacts with NR5A2. Interacts with DSG2; the interaction promotes localization of CTNNB1 at cell junctions thus reducing its nuclear localization and subsequent transcription of CTNNB1/TCF-target genes. Post-translationally, phosphorylation by GSK3B requires prior phosphorylation of Ser-45 by another kinase. Phosphorylation proceeds then from Thr-41 to Ser-33. Phosphorylated by NEK2. EGF stimulates tyrosine phosphorylation. Phosphorylated on Ser-33 and Ser-37 by HIPK2. This phosphorylation triggers proteasomal degradation. Phosphorylation at Ser-552 by AMPK promotes stabilization of the protein, enhancing TCF/LEF-mediated transcription. Phosphorylation on Ser-191 and Ser-246 by CDK5. Phosphorylation by CDK2 regulates insulin internalization. Phosphorylation by PTK6 at Tyr-64, Tyr-142, Tyr-331 and/or Tyr-333 with the predominant site at Tyr-64 is not essential for inhibition of transcriptional activity. Phosphorylation by SRC at Tyr-333 promotes interaction with isoform M2 of PKM (PKM2); promoting transcription activation. Ubiquitinated by the SCF(BTRC) E3 ligase complex when phosphorylated by GSK3B, leading to its degradation. Ubiquitinated by a E3 ubiquitin ligase complex containing UBE2D1, SIAH1, CACYBP/SIP, SKP1, APC and TBL1X, leading to its subsequent proteasomal degradation. Ubiquitinated and degraded following interaction with SOX9. Ubiquitinated via 'Lys-11'- and 'Lys-29'-linked ubiquitin chains by UBR5, leading to its stabilization. In terms of processing, S-nitrosylation at Cys-619 within adherens junctions promotes VEGF-induced, NO-dependent endothelial cell permeability by disrupting interaction with E-cadherin, thus mediating disassembly adherens junctions. Post-translationally, O-glycosylation at Ser-23 decreases nuclear localization and transcriptional activity, and increases localization to the plasma membrane and interaction with E-cadherin CDH1. Deacetylated at Lys-49 by SIRT1. Expressed in the testis.

Its subcellular location is the cytoplasm. It localises to the nucleus. It is found in the cytoskeleton. The protein resides in the cell junction. The protein localises to the adherens junction. Its subcellular location is the cell membrane. It localises to the microtubule organizing center. It is found in the centrosome. The protein resides in the spindle pole. The protein localises to the synapse. Its subcellular location is the cilium basal body. Key downstream component of the canonical Wnt signaling pathway. In the absence of Wnt, forms a complex with AXIN1, AXIN2, APC, CSNK1A1 and GSK3B that promotes phosphorylation on N-terminal Ser and Thr residues and ubiquitination of CTNNB1 via BTRC and its subsequent degradation by the proteasome. In the presence of Wnt ligand, CTNNB1 is not ubiquitinated and accumulates in the nucleus, where it acts as a coactivator for transcription factors of the TCF/LEF family, leading to activate Wnt responsive genes. Also acts as a coactivator for other transcription factors, such as NR5A2. Promotes epithelial to mesenchymal transition/mesenchymal to epithelial transition (EMT/MET) via driving transcription of CTNNB1/TCF-target genes. Involved in the regulation of cell adhesion, as component of an E-cadherin:catenin adhesion complex. Acts as a negative regulator of centrosome cohesion. Involved in the CDK2/PTPN6/CTNNB1/CEACAM1 pathway of insulin internalization. Blocks anoikis of malignant kidney and intestinal epithelial cells and promotes their anchorage-independent growth by down-regulating DAPK2. Disrupts PML function and PML-NB formation by inhibiting RANBP2-mediated sumoylation of PML. Promotes neurogenesis by maintaining sympathetic neuroblasts within the cell cycle. Involved in chondrocyte differentiation via interaction with SOX9: SOX9-binding competes with the binding sites of TCF/LEF within CTNNB1, thereby inhibiting the Wnt signaling. Acts as a positive regulator of odontoblast differentiation during mesenchymal tooth germ formation, via promoting the transcription of differentiation factors such as LEF1, BMP2 and BMP4. Activity is repressed in a MSX1-mediated manner at the bell stage of mesenchymal tooth germ formation which prevents premature differentiation of odontoblasts. The protein is Catenin beta-1 of Rattus norvegicus (Rat).